The following is a 220-amino-acid chain: N-(5'-phosphoribosyl)anthranilate isomerase (220 aa).

The protein belongs to the TrpF family.

The enzyme catalyses N-(5-phospho-beta-D-ribosyl)anthranilate = 1-(2-carboxyphenylamino)-1-deoxy-D-ribulose 5-phosphate. The protein operates within amino-acid biosynthesis; L-tryptophan biosynthesis; L-tryptophan from chorismate: step 3/5. The chain is N-(5'-phosphoribosyl)anthranilate isomerase from Xylella fastidiosa (strain 9a5c).